The primary structure comprises 300 residues: Erythroblast NAD(P)(+)--arginine ADP-ribosyltransferase (300 aa).

A signal peptide spans 1 to 22; that stretch reads MEEPLLHAILGLVLLLSTRTDA. Intrachain disulfides connect cysteine 51/cysteine 260 and cysteine 159/cysteine 208. Positions 70 to 256 constitute a TR mART core domain; that stretch reads ETFAEGWRSA…IQLRSQGKSS (187 aa). NAD(+) contacts are provided by tyrosine 107, arginine 164, and glutamine 183. Residue arginine 164 is part of the active site. Residue serine 186 is part of the active site. NAD(+) is bound at residue serine 217. Glutamate 224 is an active-site residue. Residues 276–300 are disordered; sequence SADKSSPLPRSPWPGWAPLAAPHSH.

The protein belongs to the Arg-specific ADP-ribosyltransferase family.

It catalyses the reaction L-arginyl-[protein] + NAD(+) = N(omega)-(ADP-D-ribosyl)-L-arginyl-[protein] + nicotinamide + H(+). This chain is Erythroblast NAD(P)(+)--arginine ADP-ribosyltransferase (MADPRT), found in Gallus gallus (Chicken).